Here is an 849-residue protein sequence, read N- to C-terminus: MKNKILFSFSNPMNSNSSNNIENNNNSNNNNNNFKNNFKNFSRKRTNDIEIEDNITFSELLLQKEVLKGLEDGGYQRPSPIQLKAIPLGISGVDLIAQAKSGTGKTIVFGVIALECVLRESKLLRQKQELNKTQLTNQTNKQLLEMDDDTYVETMVGIIRKPLVLIIAPTREIAVQIKDVIKSISKYCKRIKCEVFIGGLNSNNNKDENNNNILNNEDVNRLNGTQIIVGTPGKIKSLIENLHLRTDTLKMVIMDEADKLLDASFSKTINWIYSAIGNGNSNKNNSSSGSGIQMLAFSATYPSYLINLLKLYMNNENLVEIRLCSDTPSLEGIKQYYQIFRNDFTENNYKTFQNKCKSLVLVLEQVSFYQAIIFCNHKIRGEELTRQLNREGWPTAFIAGGQNQKDRLSTMSALKSFNIRILVSTDLISRGIDVERVNLVINLDLPKDHETYFHRIGRTGRFGTYGVSITFINMKSIQQQQQQQQQQQQQIENENENENNNNNEGFQEIDFINQLIQEYSVDITERVDNDIIPEELYSYQLSNPNDQQSLANLKLKQQQTILLNKQLEELKINENENENQYQNEDEEEEQEEDDYHYENQHQNEDEEEEQEEDDYHYENQHQNEEEEQEQQEEDDDNYNYENDNDSEEYEFIDDSIIEQTEYYYLNSNNNNNNNKNKYGNTINNNHYRNSSFNGPKNSINNNKFKNKNINNNDQRNSQSNGIKKKVNTNNNNFYPHYYNNPYPQNYYYDYQYFSDNSYYNNNYNNNNNNNNNNNNNNNNNNNNNNNNNNNNNNNNNNNNNNNNNNNNYYQQHGNNPYGYNIPNSIQYSSNQFYYCTCPNCPTMNYHQYI.

Positions 9–39 (FSNPMNSNSSNNIENNNNSNNNNNNFKNNFK) are disordered. Residues 55 to 83 (ITFSELLLQKEVLKGLEDGGYQRPSPIQL) carry the Q motif motif. ATP-binding positions include Arg-77, Gln-82, 99–106 (AKSGTGKT), and 102–107 (GTGKTI). Residues 86 to 319 (IPLGISGVDL…KLYMNNENLV (234 aa)) form the Helicase ATP-binding domain. Positions 255–258 (DEAD) match the DEAD box motif. In terms of domain architecture, Helicase C-terminal spans 355–499 (KCKSLVLVLE…QIENENENEN (145 aa)). Disordered stretches follow at residues 480–504 (QQQQQQQQQQQIENENENENNNNNE), 572–644 (INEN…ENDN), 667–737 (SNNN…YPHY), and 761–817 (NNYN…NNPY). Composition is skewed to acidic residues over residues 583–595 (NEDEEEEQEEDDY), 604–615 (EDEEEEQEEDDY), and 624–644 (EEEEQEQQEEDDDNYNYENDN). 2 stretches are compositionally biased toward low complexity: residues 667-687 (SNNNNNNNKNKYGNTINNNHY) and 696-720 (KNSINNNKFKNKNINNNDQRNSQSN).

The protein belongs to the DEAD box helicase family. DDX20 subfamily. Part of the core SMN complex.

It is found in the cytoplasm. It localises to the nucleus. It catalyses the reaction ATP + H2O = ADP + phosphate + H(+). Functionally, the SMN complex catalyzes the assembly of small nuclear ribonucleoproteins (snRNPs), the building blocks of the spliceosome, and thereby plays an important role in the splicing of cellular pre-mRNAs. Most spliceosomal snRNPs contain a common set of Sm proteins SNRPB, SNRPD1, SNRPD2, SNRPD3, SNRPE, SNRPF and SNRPG that assemble in a heptameric protein ring on the Sm site of the small nuclear RNA to form the core snRNP (Sm core). In the cytosol, the Sm proteins SNRPD1, SNRPD2, SNRPE, SNRPF and SNRPG are trapped in an inactive 6S pICln-Sm complex by the chaperone CLNS1A that controls the assembly of the core snRNP. To assemble core snRNPs, the SMN complex accepts the trapped 5Sm proteins from CLNS1A forming an intermediate. Binding of snRNA inside 5Sm triggers eviction of the SMN complex, thereby allowing binding of SNRPD3 and SNRPB to complete assembly of the core snRNP. May also play a role in the metabolism of small nucleolar ribonucleoprotein (snoRNPs). This chain is Probable ATP-dependent RNA helicase ddx20 (ddx20), found in Dictyostelium discoideum (Social amoeba).